A 292-amino-acid chain; its full sequence is tRNA dimethylallyltransferase (292 aa).

10–17 serves as a coordination point for ATP; sequence GPTASGKS. 12 to 17 provides a ligand contact to substrate; the sequence is TASGKS. 2 interaction with substrate tRNA regions span residues 35-38 and 159-163; these read DSMQ and QRIVR.

Belongs to the IPP transferase family. In terms of assembly, monomer. Mg(2+) is required as a cofactor.

The enzyme catalyses adenosine(37) in tRNA + dimethylallyl diphosphate = N(6)-dimethylallyladenosine(37) in tRNA + diphosphate. Its function is as follows. Catalyzes the transfer of a dimethylallyl group onto the adenine at position 37 in tRNAs that read codons beginning with uridine, leading to the formation of N6-(dimethylallyl)adenosine (i(6)A). This chain is tRNA dimethylallyltransferase, found in Chelativorans sp. (strain BNC1).